Here is an 807-residue protein sequence, read N- to C-terminus: Probable E3 ubiquitin-protein ligase mug30 (807 aa).

In terms of domain architecture, HECT spans 453–807 (RNKDFRKALK…LLETNGFNIR (355 aa)). Cysteine 775 serves as the catalytic Glycyl thioester intermediate.

Its subcellular location is the cytoplasm. It localises to the cytoskeleton. It is found in the microtubule organizing center. The protein resides in the spindle pole body. It carries out the reaction S-ubiquitinyl-[E2 ubiquitin-conjugating enzyme]-L-cysteine + [acceptor protein]-L-lysine = [E2 ubiquitin-conjugating enzyme]-L-cysteine + N(6)-ubiquitinyl-[acceptor protein]-L-lysine.. The protein operates within protein modification; protein ubiquitination. Probable E3 ubiquitin-protein ligase. Has a role in meiosis. The chain is Probable E3 ubiquitin-protein ligase mug30 (mug30) from Schizosaccharomyces pombe (strain 972 / ATCC 24843) (Fission yeast).